The chain runs to 219 residues: Uracil-DNA glycosylase (219 aa).

Asp-62 (proton acceptor) is an active-site residue.

This sequence belongs to the uracil-DNA glycosylase (UDG) superfamily. UNG family.

The protein resides in the cytoplasm. The enzyme catalyses Hydrolyzes single-stranded DNA or mismatched double-stranded DNA and polynucleotides, releasing free uracil.. In terms of biological role, excises uracil residues from the DNA which can arise as a result of misincorporation of dUMP residues by DNA polymerase or due to deamination of cytosine. The protein is Uracil-DNA glycosylase of Lactococcus lactis subsp. cremoris (strain MG1363).